The sequence spans 231 residues: Enolase-phosphatase E1 (231 aa).

The protein belongs to the HAD-like hydrolase superfamily. MasA/MtnC family. As to quaternary structure, monomer. Mg(2+) serves as cofactor.

It catalyses the reaction 5-methylsulfanyl-2,3-dioxopentyl phosphate + H2O = 1,2-dihydroxy-5-(methylsulfanyl)pent-1-en-3-one + phosphate. Its pathway is amino-acid biosynthesis; L-methionine biosynthesis via salvage pathway; L-methionine from S-methyl-5-thio-alpha-D-ribose 1-phosphate: step 3/6. The protein operates within amino-acid biosynthesis; L-methionine biosynthesis via salvage pathway; L-methionine from S-methyl-5-thio-alpha-D-ribose 1-phosphate: step 4/6. Functionally, bifunctional enzyme that catalyzes the enolization of 2,3-diketo-5-methylthiopentyl-1-phosphate (DK-MTP-1-P) into the intermediate 2-hydroxy-3-keto-5-methylthiopentenyl-1-phosphate (HK-MTPenyl-1-P), which is then dephosphorylated to form the acireductone 1,2-dihydroxy-3-keto-5-methylthiopentene (DHK-MTPene). This chain is Enolase-phosphatase E1, found in Stenotrophomonas maltophilia (strain R551-3).